Reading from the N-terminus, the 97-residue chain is Aspartyl/glutamyl-tRNA(Asn/Gln) amidotransferase subunit C (97 aa).

The protein belongs to the GatC family. Heterotrimer of A, B and C subunits.

The catalysed reaction is L-glutamyl-tRNA(Gln) + L-glutamine + ATP + H2O = L-glutaminyl-tRNA(Gln) + L-glutamate + ADP + phosphate + H(+). It catalyses the reaction L-aspartyl-tRNA(Asn) + L-glutamine + ATP + H2O = L-asparaginyl-tRNA(Asn) + L-glutamate + ADP + phosphate + 2 H(+). Allows the formation of correctly charged Asn-tRNA(Asn) or Gln-tRNA(Gln) through the transamidation of misacylated Asp-tRNA(Asn) or Glu-tRNA(Gln) in organisms which lack either or both of asparaginyl-tRNA or glutaminyl-tRNA synthetases. The reaction takes place in the presence of glutamine and ATP through an activated phospho-Asp-tRNA(Asn) or phospho-Glu-tRNA(Gln). This chain is Aspartyl/glutamyl-tRNA(Asn/Gln) amidotransferase subunit C, found in Prochlorococcus marinus (strain SARG / CCMP1375 / SS120).